The following is a 396-amino-acid chain: Acetylornithine aminotransferase 2 (396 aa).

Pyridoxal 5'-phosphate contacts are provided by residues 102–103 (GA) and phenylalanine 134. N(2)-acetyl-L-ornithine is bound at residue arginine 137. A pyridoxal 5'-phosphate-binding site is contributed by 219–222 (DEVQ). At lysine 248 the chain carries N6-(pyridoxal phosphate)lysine. Threonine 276 contributes to the pyridoxal 5'-phosphate binding site.

This sequence belongs to the class-III pyridoxal-phosphate-dependent aminotransferase family. ArgD subfamily. In terms of assembly, homodimer. It depends on pyridoxal 5'-phosphate as a cofactor.

The protein localises to the cytoplasm. It carries out the reaction N(2)-acetyl-L-ornithine + 2-oxoglutarate = N-acetyl-L-glutamate 5-semialdehyde + L-glutamate. The protein operates within amino-acid biosynthesis; L-arginine biosynthesis; N(2)-acetyl-L-ornithine from L-glutamate: step 4/4. The sequence is that of Acetylornithine aminotransferase 2 from Bordetella parapertussis (strain 12822 / ATCC BAA-587 / NCTC 13253).